Consider the following 1567-residue polypeptide: Transmembrane protein 131 homolog (1567 aa).

A signal peptide spans 1–32; sequence MPTQVQMRPLLRIFAEPILLILIFLFTLGAKG. The Lumenal portion of the chain corresponds to 33–1049; the sequence is EKVLQETFLG…RPGWESSLKN (1017 aa). Residues 55–228 form a papD-L domain region; the sequence is RLVPSRLDFG…TLKPVIRISF (174 aa). Residues N84, N114, N168, N235, N316, N317, N342, N372, N409, N462, N563, N890, and N1013 are each glycosylated (N-linked (GlcNAc...) asparagine). The chain crosses the membrane as a helical span at residues 1050 to 1070; that stretch reads AALVVLLASFGLVLVAAVFDA. Topologically, residues 1071 to 1567 are cytoplasmic; the sequence is KAIMVQQNAY…SQRNNHNHMN (497 aa). Residues 1096 to 1130 are a coiled coil; it reads RNIVKLQAEEAAAKAESVQQQQKVKNGQLKELRKR. Disordered stretches follow at residues 1112 to 1337, 1364 to 1386, and 1502 to 1567; these read SVQQ…SPDA, PTDNGFDWNHATSSSDLGPIGDN, and PGLE…NHMN. 2 stretches are compositionally biased toward low complexity: residues 1132–1150 and 1166–1183; these read VVNSTNSKSKSKSSWSPWS and KTVVSTPVTPPAASAPAA. Phosphoserine occurs at positions 1201 and 1258. Over residues 1247 to 1259 the composition is skewed to polar residues; it reads AKSSPPQQENISP. Residues 1284-1298 show a composition bias toward basic and acidic residues; the sequence is PGRERERERRSKDQK. Polar residues predominate over residues 1319-1331; sequence KLNFGQTTNSTSP. 2 stretches are compositionally biased toward polar residues: residues 1507–1519 and 1536–1561; these read SARQTHNLAQEQV and LPTQYDPFTSPSSIWSDTWRQSSQRN.

The protein belongs to the TMEM131 family. In terms of assembly, may interact (via PapD-L domain) with collagen proteins (via C-terminus); the interaction is direct and is involved in assembly and TRAPPIII ER-to-Golgi transport complex-dependent secretion of collagen.

It is found in the membrane. Collagen binding transmembrane protein involved in collagen secretion, probably by recruiting the ER-to-Golgi transport complex TRAPPIII. This chain is Transmembrane protein 131 homolog, found in Drosophila melanogaster (Fruit fly).